The primary structure comprises 131 residues: Peptide methionine sulfoxide reductase MsrB (131 aa).

The 123-residue stretch at Leu-8–Arg-130 folds into the MsrB domain. Zn(2+)-binding residues include Cys-47, Cys-50, Cys-96, and Cys-99. Catalysis depends on Cys-119, which acts as the Nucleophile.

This sequence belongs to the MsrB Met sulfoxide reductase family. Requires Zn(2+) as cofactor.

It catalyses the reaction L-methionyl-[protein] + [thioredoxin]-disulfide + H2O = L-methionyl-(R)-S-oxide-[protein] + [thioredoxin]-dithiol. The chain is Peptide methionine sulfoxide reductase MsrB from Pseudomonas fluorescens (strain Pf0-1).